The following is a 731-amino-acid chain: E3 ubiquitin-protein ligase SMURF1 (731 aa).

The C2 domain occupies 1 to 120 (MSNVVTRRGG…TGYQRLDLCK (120 aa)). The tract at residues 210-235 (RVRGPEVREHVQTPQNRSHGFQSQDL) is disordered. The span at 221–234 (QTPQNRSHGFQSQD) shows a compositional bias: polar residues. WW domains follow at residues 233 to 266 (QDLP…DPRI) and 279 to 312 (GSLP…DPRL). An HECT domain is found at 394–731 (RPKDLKKRLM…VEETSGFAVE (338 aa)). Catalysis depends on C699, which acts as the Glycyl thioester intermediate.

Its subcellular location is the cytoplasm. The protein localises to the cell membrane. It catalyses the reaction S-ubiquitinyl-[E2 ubiquitin-conjugating enzyme]-L-cysteine + [acceptor protein]-L-lysine = [E2 ubiquitin-conjugating enzyme]-L-cysteine + N(6)-ubiquitinyl-[acceptor protein]-L-lysine.. The protein operates within protein modification; protein ubiquitination. Functionally, E3 ubiquitin-protein ligase that acts as a negative regulator of BMP signaling pathway. Mediates ubiquitination and degradation of smad1 and smad5, 2 receptor-regulated SMADs specific for the BMP pathway. Promotes ubiquitination and subsequent proteasomal degradation of TRAF family members and rhoa. May play a role in dendrite formation by melanocytes. The protein is E3 ubiquitin-protein ligase SMURF1 (smurf1) of Xenopus laevis (African clawed frog).